Reading from the N-terminus, the 324-residue chain is Ribose-phosphate pyrophosphokinase (324 aa).

ATP-binding positions include 45–47 and 104–105; these read NGE and RQ. 2 residues coordinate Mg(2+): His138 and Asp178. Lys201 is a catalytic residue. Residues Arg203, Asp229, and 233–237 each bind D-ribose 5-phosphate; that span reads DTGGT.

Belongs to the ribose-phosphate pyrophosphokinase family. Class I subfamily. As to quaternary structure, homohexamer. It depends on Mg(2+) as a cofactor.

Its subcellular location is the cytoplasm. The enzyme catalyses D-ribose 5-phosphate + ATP = 5-phospho-alpha-D-ribose 1-diphosphate + AMP + H(+). It functions in the pathway metabolic intermediate biosynthesis; 5-phospho-alpha-D-ribose 1-diphosphate biosynthesis; 5-phospho-alpha-D-ribose 1-diphosphate from D-ribose 5-phosphate (route I): step 1/1. Its function is as follows. Involved in the biosynthesis of the central metabolite phospho-alpha-D-ribosyl-1-pyrophosphate (PRPP) via the transfer of pyrophosphoryl group from ATP to 1-hydroxyl of ribose-5-phosphate (Rib-5-P). This chain is Ribose-phosphate pyrophosphokinase, found in Streptomyces coelicolor (strain ATCC BAA-471 / A3(2) / M145).